A 792-amino-acid polypeptide reads, in one-letter code: MNEKSLRVLEYNKIIDLLKKKASSSLGLKYIENLVPNTDFVEVKSMLEETSEAQSIIIKRGSVGLEGIHDIEDKVKRAYIGASLDPGSLIMIADTLRVARRLRNSLSSSDEEDFNYPIIQSLSNSLYVYKDIEDQIYNAIISEVEISDNASSILRDIRRRIAQKNQSIRSKLNSIISSTTYQKYLQDAIISLRGDRFVVPVKSEYRSQVAGIVHDQSSSGATLFIEPMTIVEMNNELRQLKLGEQEEIERILSELSAMVGEVSEDLISNQEILGRLDFAFSKGKLSIQMRGIEPTLNEDKYLNIKNGRHPLLDKKKVVANTIYLGRDFHTLVITGPNTGGKTVTIKTVGLFALMTQSGLHIPADYGSSMCVYDNVFADIGDEQSIEQSLSTFSSHMTNIVSILQNVTADSLVIFDELGAGTDPVEGAALAIAVLEDINSVGAKCIATTHYSELKNYALTKSGVENAAVEFDIETLSPTYKLLIGVPGKSNAFEISRKLGLSDYVISRAKEYINTENIALEDVLQNVEKNRIKAVEDREEAERLKEEIEKLKVEYDEKLEKLVSQRDKMIEKAKSEAFSIIRQAKEEVDIIIKELRSLEQERASKEKNRKIEELRKELTSSMGSLQPTVKSMIVPKVSNKEIKDLKPGEEVKVITLNQNGSVVSVDKKRKEAVVQIGIMKMTLPFKSLQKTRKDVSTNVTKSTRNIIRSKSGSVKNEVDLRGLNLEEAIMEVEKYLDDAYVAGLESVTVIHGIGTGVLKAGLQDILRRNRHVKSQRGGQYGEGGAGVTIVKLK.

335–342 is an ATP binding site; sequence GPNTGGKT. The Smr domain maps to 717–792; the sequence is VDLRGLNLEE…GAGVTIVKLK (76 aa).

It belongs to the DNA mismatch repair MutS family. MutS2 subfamily. In terms of assembly, homodimer. Binds to stalled ribosomes, contacting rRNA.

Its function is as follows. Endonuclease that is involved in the suppression of homologous recombination and thus may have a key role in the control of bacterial genetic diversity. Acts as a ribosome collision sensor, splitting the ribosome into its 2 subunits. Detects stalled/collided 70S ribosomes which it binds and splits by an ATP-hydrolysis driven conformational change. Acts upstream of the ribosome quality control system (RQC), a ribosome-associated complex that mediates the extraction of incompletely synthesized nascent chains from stalled ribosomes and their subsequent degradation. Probably generates substrates for RQC. In Clostridioides difficile (strain 630) (Peptoclostridium difficile), this protein is Endonuclease MutS2.